Consider the following 90-residue polypeptide: Small ribosomal subunit protein bS16 (90 aa).

The protein belongs to the bacterial ribosomal protein bS16 family.

This Bacillus licheniformis (strain ATCC 14580 / DSM 13 / JCM 2505 / CCUG 7422 / NBRC 12200 / NCIMB 9375 / NCTC 10341 / NRRL NRS-1264 / Gibson 46) protein is Small ribosomal subunit protein bS16.